Consider the following 444-residue polypeptide: Type VII secretion system protein EssB (444 aa).

The Cytoplasmic portion of the chain corresponds to 1 to 229; it reads MVKNHDPKNE…RKVGHTVFKW (229 aa). Residues 230–250 form a helical membrane-spanning segment; sequence VAIGMTTLSVLLIAFLAFLYF. At 251-444 the chain is on the extracellular side; sequence SVMKHNERIE…EKRQEAERKK (194 aa). Residues 366–444 form a disordered region; that stretch reads KNNGDLSNDK…EKRQEAERKK (79 aa). Positions 372 to 444 are enriched in basic and acidic residues; that stretch reads SNDKRSEETK…EKRQEAERKK (73 aa). A coiled-coil region spans residues 387–443; sequence LQDILDKEKQVKDEKAKSEEEKAKAKDEKLKQQEENEKKQKEQAQKDKEKRQEAERK.

The protein belongs to the EssB family.

The protein resides in the cell membrane. In terms of biological role, component of the type VII secretion system (Ess). Required for the secretion of EsxA. The polypeptide is Type VII secretion system protein EssB (Staphylococcus aureus (strain MRSA252)).